Here is a 410-residue protein sequence, read N- to C-terminus: Homeobox protein Hox-A3a (410 aa).

Residues 79–126 (VTDTSDNKQPPTAPSGPSSPSSLNQIPNIDSAAKNPVHVSPTPSTRKH) are disordered. Positions 127-132 (IFPWMK) match the Antp-type hexapeptide motif. Residues 163 to 222 (SKRARTAYTSAQLVELEKEFHFNRYLCRPRRVEMANLLNLTERQIKIWFQNRRMKYKKDQ) constitute a DNA-binding region (homeobox). Positions 222 to 249 (QKGLGMMPSPGAQSPHSPVSLSSGGGGG) are disordered.

This sequence belongs to the Antp homeobox family.

It localises to the nucleus. Functionally, sequence-specific transcription factor which is part of a developmental regulatory system that provides cells with specific positional identities on the anterior-posterior axis. This is Homeobox protein Hox-A3a (hoxa3a) from Danio rerio (Zebrafish).